The primary structure comprises 98 residues: Co-chaperonin GroES (98 aa).

The protein belongs to the GroES chaperonin family. Heptamer of 7 subunits arranged in a ring. Interacts with the chaperonin GroEL.

It localises to the cytoplasm. Together with the chaperonin GroEL, plays an essential role in assisting protein folding. The GroEL-GroES system forms a nano-cage that allows encapsulation of the non-native substrate proteins and provides a physical environment optimized to promote and accelerate protein folding. GroES binds to the apical surface of the GroEL ring, thereby capping the opening of the GroEL channel. The polypeptide is Co-chaperonin GroES (Coprothermobacter proteolyticus (strain ATCC 35245 / DSM 5265 / OCM 4 / BT)).